Consider the following 700-residue polypeptide: MEPLCPLLLVGFSLPLARALRGNETTADSNETTTTSGPPDPGASQPLLAWLLLPLLLLLLVLLLAAYFFRFRKQRKAVVSTSDKKMPNGILEEQEQQRVMLLSRSPSGPKKYFPIPVEHLEEEIRIRSADDCKQFREEFNSLPSGHIQGTFELANKEENREKNRYPNILPNDHSRVILSQLDGIPCSDYINASYIDGYKEKNKFIAAQGPKQETVNDFWRMVWEQKSATIVMLTNLKERKEEKCHQYWPDQGCWTYGNIRVCVEDCVVLVDYTIRKFCIQPQLPDGCKAPRLVSQLHFTSWPDFGVPFTPIGMLKFLKKVKTLNPVHAGPIVVHCSAGVGRTGTFIVIDAMMAMMHAEQKVDVFEFVSRIRNQRPQMVQTDMQYTFIYQALLEYYLYGDTELDVSSLEKHLQTMHGTTTHFDKIGLEEEFRKLTNVRIMKENMRTGNLPANMKKARVIQIIPYDFNRVILSMKRGQEYTDYINASFIDGYRQKDYFIATQGPLAHTVEDFWRMIWEWKSHTIVMLTEVQEREQDKCYQYWPTEGSVTHGEITIEIKNDTLSEAISIRDFLVTLNQPQARQEEQVRVVRQFHFHGWPEIGIPAEGKGMIDLIAAVQKQQQQTGNHPITVHCSAGAGRTGTFIALSNILERVKAEGLLDVFQAVKSLRLQRPHMVQTLEQYEFCYKVVQDFIDIFSDYANFK.

Residues Met-1–Ala-19 form the signal peptide. The Extracellular segment spans residues Leu-20–Pro-46. Residues Asn-23 and Asn-30 are each glycosylated (N-linked (GlcNAc...) asparagine). The helical transmembrane segment at Leu-47 to Phe-69 threads the bilayer. Residues Arg-70–Lys-700 lie on the Cytoplasmic side of the membrane. Tyrosine-protein phosphatase domains lie at Phe-135–Tyr-394 and Leu-426–Phe-689. Substrate contacts are provided by residues Asp-303, Cys-335–Arg-341, and Gln-379. Cys-335 serves as the catalytic Phosphocysteine intermediate. Cys-630 (phosphocysteine intermediate) is an active-site residue. Phosphotyrosine is present on Tyr-696.

Belongs to the protein-tyrosine phosphatase family. Receptor class 4 subfamily. Monomer. Isoform 2: Homodimer. Can form oligomers. Dimerization is increased by oxidative stress and decreased by EGFR. Isoform 2 interacts with GRB2. In terms of processing, a catalytically active cytoplasmic form (p65) is produced by proteolytic cleavage of either isoform 1, isoform 2 or isoform 3. Post-translationally, isoform 1 and isoform 2 are phosphorylated on tyrosine residues by tyrosine kinase Neu. Isoform 1 is glycosylated. In terms of tissue distribution, expressed in giant cell tumor (osteoclastoma rich in multinucleated osteoclastic cells).

It is found in the cell membrane. It localises to the cytoplasm. The catalysed reaction is O-phospho-L-tyrosyl-[protein] + H2O = L-tyrosyl-[protein] + phosphate. In terms of biological role, isoform 1 plays a critical role in signaling transduction pathways and phosphoprotein network topology in red blood cells. May play a role in osteoclast formation and function. Functionally, isoform 2 acts as a negative regulator of insulin receptor (IR) signaling in skeletal muscle. Regulates insulin-induced tyrosine phosphorylation of insulin receptor (IR) and insulin receptor substrate 1 (IRS-1), phosphorylation of protein kinase B and glycogen synthase kinase-3 and insulin induced stimulation of glucose uptake. Isoform 1 and isoform 2 act as a negative regulator of FceRI-mediated signal transduction leading to cytokine production and degranulation, most likely by acting at the level of SYK to affect downstream events such as phosphorylation of SLP76 and LAT and mobilization of Ca(2+). The chain is Receptor-type tyrosine-protein phosphatase epsilon (PTPRE) from Homo sapiens (Human).